The following is a 500-amino-acid chain: Glycerol kinase (500 aa).

T13 is a binding site for ADP. ATP-binding residues include T13, T14, and S15. T13 provides a ligand contact to sn-glycerol 3-phosphate. R17 is a binding site for ADP. Residues R83, E84, Y135, and D245 each coordinate sn-glycerol 3-phosphate. Glycerol-binding residues include R83, E84, Y135, D245, and Q246. T267 and G310 together coordinate ADP. ATP-binding residues include T267, G310, Q314, and G411. The ADP site is built by G411 and N415.

The protein belongs to the FGGY kinase family. As to quaternary structure, homotetramer and homodimer (in equilibrium).

It carries out the reaction glycerol + ATP = sn-glycerol 3-phosphate + ADP + H(+). It participates in polyol metabolism; glycerol degradation via glycerol kinase pathway; sn-glycerol 3-phosphate from glycerol: step 1/1. Its activity is regulated as follows. Activated by phosphorylation and inhibited by fructose 1,6-bisphosphate (FBP). Functionally, key enzyme in the regulation of glycerol uptake and metabolism. Catalyzes the phosphorylation of glycerol to yield sn-glycerol 3-phosphate. The polypeptide is Glycerol kinase (Carboxydothermus hydrogenoformans (strain ATCC BAA-161 / DSM 6008 / Z-2901)).